The following is a 783-amino-acid chain: Rho GTPase-activating protein gacR (783 aa).

Residues 138-188 (AKNRFDKARLSFDEASEQFKQLRKKQNNINNEKLLEAEEDLDYATQQFSDI) are a coiled coil. Residues 262-299 (QFEQTNSSRTISLPPPPPPKPTSSTPSSSPSPSPSSSI) are disordered. Residues 283-299 (TSSTPSSSPSPSPSSSI) are compositionally biased toward low complexity. A Rho-GAP domain is found at 319–509 (MALSTITERE…FIISNFNNIF (191 aa)). Residues 527–539 (GSSGGGGGGGSSG) show a composition bias toward gly residues. Residues 527–745 (GSSGGGGGGG…TTNSRPLSNS (219 aa)) form a disordered region. Low complexity-rich tracts occupy residues 568–589 (SVNT…ASSA), 599–630 (PSSS…NINP), 641–651 (PKKISSSSNSL), and 661–698 (SIPE…RSST). The span at 706–738 (NRVSMYLQNSNTGVPLPSQKPQRVISNNNTTTN) shows a compositional bias: polar residues.

It is found in the cytoplasm. Its function is as follows. Rho GTPase-activating protein involved in the signal transduction pathway. This chain is Rho GTPase-activating protein gacR (gacR), found in Dictyostelium discoideum (Social amoeba).